We begin with the raw amino-acid sequence, 477 residues long: UDP-N-acetylmuramate--L-alanine ligase (477 aa).

An ATP-binding site is contributed by 112-118 (GTHGKTT).

The protein belongs to the MurCDEF family.

Its subcellular location is the cytoplasm. The catalysed reaction is UDP-N-acetyl-alpha-D-muramate + L-alanine + ATP = UDP-N-acetyl-alpha-D-muramoyl-L-alanine + ADP + phosphate + H(+). It participates in cell wall biogenesis; peptidoglycan biosynthesis. Cell wall formation. This chain is UDP-N-acetylmuramate--L-alanine ligase, found in Cupriavidus necator (strain ATCC 17699 / DSM 428 / KCTC 22496 / NCIMB 10442 / H16 / Stanier 337) (Ralstonia eutropha).